The chain runs to 279 residues: Movement protein (279 aa).

Positions 256–266 (PPIAIGSPSAS) are enriched in low complexity. Residues 256-279 (PPIAIGSPSASRNNSFRSQVVNGL) form a disordered region. Positions 267 to 279 (RNNSFRSQVVNGL) are enriched in polar residues.

Belongs to the cucumovirus movement protein family.

Its subcellular location is the host cell junction. The protein localises to the host plasmodesma. Functionally, transports viral genome to neighboring plant cells directly through plasmosdesmata, without any budding. The movement protein allows efficient cell to cell propagation, by bypassing the host cell wall barrier. Acts by forming a tubular structure at the host plasmodesmata, enlarging it enough to allow free passage of virion capsids. This chain is Movement protein, found in Cucumis sativus (Cucumber).